The sequence spans 310 residues: Methionyl-tRNA formyltransferase (310 aa).

(6S)-5,6,7,8-tetrahydrofolate is bound at residue Ser-111–Pro-114.

Belongs to the Fmt family.

It catalyses the reaction L-methionyl-tRNA(fMet) + (6R)-10-formyltetrahydrofolate = N-formyl-L-methionyl-tRNA(fMet) + (6S)-5,6,7,8-tetrahydrofolate + H(+). In terms of biological role, attaches a formyl group to the free amino group of methionyl-tRNA(fMet). The formyl group appears to play a dual role in the initiator identity of N-formylmethionyl-tRNA by promoting its recognition by IF2 and preventing the misappropriation of this tRNA by the elongation apparatus. The sequence is that of Methionyl-tRNA formyltransferase from Methylobacterium nodulans (strain LMG 21967 / CNCM I-2342 / ORS 2060).